A 230-amino-acid chain; its full sequence is C-reactive protein (230 aa).

The signal sequence occupies residues 1–19 (MEKLLWCLLITISFSQAFG). Positions 24–223 (SKQAFVFPGV…DVFIKPQLWP (200 aa)) constitute a Pentraxin (PTX) domain. Cysteine 55 and cysteine 114 form a disulfide bridge. Asparagine 78 lines the Ca(2+) pocket. The N-linked (GlcNAc...) asparagine glycan is linked to asparagine 147. Residues glutamate 155, glutamine 156, aspartate 157, and glutamine 167 each contribute to the Ca(2+) site. A disulfide bridge links cysteine 227 with cysteine 228.

This sequence belongs to the pentraxin family. As to quaternary structure, homopentamer; disulfide-linked. Pentraxin (or pentaxin) have a discoid arrangement of 5 non-covalently bound subunits. Two of the five chains form a dimer linked by two interchain disulfide bonds located in the C-terminal heptapeptide and specific to rat CRP. Interacts with FCN1; may regulate monocyte activation by FCN1. Ca(2+) is required as a cofactor. Post-translationally, the last two cysteines are involved either in interchain disulfide bonds or in an intrachain bond. Found in plasma.

The protein localises to the secreted. In terms of biological role, displays several functions associated with host defense: it promotes agglutination, bacterial capsular swelling, phagocytosis and complement fixation through its calcium-dependent binding to phosphorylcholine. Can interact with DNA and histones and may scavenge nuclear material released from damaged circulating cells. This chain is C-reactive protein (Crp), found in Rattus norvegicus (Rat).